A 315-amino-acid chain; its full sequence is Acetyl-coenzyme A carboxylase carboxyl transferase subunit alpha (315 aa).

The 255-residue stretch at 38 to 292 (RLQKKSNELT…KLRLKEDLAE (255 aa)) folds into the CoA carboxyltransferase C-terminal domain.

This sequence belongs to the AccA family. Acetyl-CoA carboxylase is a heterohexamer composed of biotin carboxyl carrier protein (AccB), biotin carboxylase (AccC) and two subunits each of ACCase subunit alpha (AccA) and ACCase subunit beta (AccD).

It is found in the cytoplasm. It carries out the reaction N(6)-carboxybiotinyl-L-lysyl-[protein] + acetyl-CoA = N(6)-biotinyl-L-lysyl-[protein] + malonyl-CoA. The protein operates within lipid metabolism; malonyl-CoA biosynthesis; malonyl-CoA from acetyl-CoA: step 1/1. Its function is as follows. Component of the acetyl coenzyme A carboxylase (ACC) complex. First, biotin carboxylase catalyzes the carboxylation of biotin on its carrier protein (BCCP) and then the CO(2) group is transferred by the carboxyltransferase to acetyl-CoA to form malonyl-CoA. This chain is Acetyl-coenzyme A carboxylase carboxyl transferase subunit alpha, found in Haemophilus influenzae (strain PittEE).